A 140-amino-acid polypeptide reads, in one-letter code: Nucleoside diphosphate kinase (140 aa).

Residues Lys-11, Phe-59, Arg-87, Thr-93, Arg-104, and Asn-114 each contribute to the ATP site. His-117 (pros-phosphohistidine intermediate) is an active-site residue.

It belongs to the NDK family. As to quaternary structure, homotetramer. It depends on Mg(2+) as a cofactor.

It localises to the cytoplasm. It carries out the reaction a 2'-deoxyribonucleoside 5'-diphosphate + ATP = a 2'-deoxyribonucleoside 5'-triphosphate + ADP. It catalyses the reaction a ribonucleoside 5'-diphosphate + ATP = a ribonucleoside 5'-triphosphate + ADP. Functionally, major role in the synthesis of nucleoside triphosphates other than ATP. The ATP gamma phosphate is transferred to the NDP beta phosphate via a ping-pong mechanism, using a phosphorylated active-site intermediate. The protein is Nucleoside diphosphate kinase of Francisella philomiragia subsp. philomiragia (strain ATCC 25017 / CCUG 19701 / FSC 153 / O#319-036).